The sequence spans 256 residues: PHD finger protein ALFIN-LIKE 6 (256 aa).

Residues 144 to 200 are disordered; it reads SKDLSVNNNNSKSKPSGVKSRQSESLSKVAKMSSPPPKEEEEEEDESEDESEDDEQG. A compositionally biased stretch (low complexity) spans 146–163; sequence DLSVNNNNSKSKPSGVKS. The segment covering 182–199 has biased composition (acidic residues); that stretch reads EEEEEEDESEDESEDDEQ. The PHD-type zinc finger occupies 200–252; that stretch reads GAVCGACGDNYGTDEFWICCDACEKWFHGKCVKITPAKAEHIKHYKCPTCSNK.

This sequence belongs to the Alfin family. Interacts with H3K4me3 and to a lesser extent with H3K4me2. In terms of tissue distribution, ubiquitously expressed.

The protein resides in the nucleus. Histone-binding component that specifically recognizes H3 tails trimethylated on 'Lys-4' (H3K4me3), which mark transcription start sites of virtually all active genes. This chain is PHD finger protein ALFIN-LIKE 6 (AL6), found in Arabidopsis thaliana (Mouse-ear cress).